The chain runs to 264 residues: Acetylglutamate kinase (264 aa).

Substrate is bound by residues 50-51 (GG), Arg-72, and Asn-164.

The protein belongs to the acetylglutamate kinase family. ArgB subfamily.

The protein localises to the cytoplasm. The catalysed reaction is N-acetyl-L-glutamate + ATP = N-acetyl-L-glutamyl 5-phosphate + ADP. The protein operates within amino-acid biosynthesis; L-arginine biosynthesis; N(2)-acetyl-L-ornithine from L-glutamate: step 2/4. Functionally, catalyzes the ATP-dependent phosphorylation of N-acetyl-L-glutamate. This Moritella profunda protein is Acetylglutamate kinase.